The following is a 440-amino-acid chain: Glutamate-1-semialdehyde 2,1-aminomutase (440 aa).

Position 273 is an N6-(pyridoxal phosphate)lysine (Lys273).

The protein belongs to the class-III pyridoxal-phosphate-dependent aminotransferase family. HemL subfamily. Homodimer. Pyridoxal 5'-phosphate is required as a cofactor.

It localises to the cytoplasm. The catalysed reaction is (S)-4-amino-5-oxopentanoate = 5-aminolevulinate. Its pathway is porphyrin-containing compound metabolism; protoporphyrin-IX biosynthesis; 5-aminolevulinate from L-glutamyl-tRNA(Glu): step 2/2. This chain is Glutamate-1-semialdehyde 2,1-aminomutase, found in Alkaliphilus metalliredigens (strain QYMF).